Here is a 709-residue protein sequence, read N- to C-terminus: Fatty acid oxidation complex subunit alpha (709 aa).

The enoyl-CoA hydratase stretch occupies residues 1-188 (MEKTFNLTRR…KMGLVNDVVP (188 aa)). Residues 308-709 (RKVKKAVILG…EMAAEKTRFF (402 aa)) form a 3-hydroxyacyl-CoA dehydrogenase region.

It in the N-terminal section; belongs to the enoyl-CoA hydratase/isomerase family. In the central section; belongs to the 3-hydroxyacyl-CoA dehydrogenase family. In terms of assembly, heterotetramer of two alpha chains (FadJ) and two beta chains (FadI).

The protein localises to the cytoplasm. The enzyme catalyses a (3S)-3-hydroxyacyl-CoA = a (2E)-enoyl-CoA + H2O. The catalysed reaction is a 4-saturated-(3S)-3-hydroxyacyl-CoA = a (3E)-enoyl-CoA + H2O. It catalyses the reaction a (3S)-3-hydroxyacyl-CoA + NAD(+) = a 3-oxoacyl-CoA + NADH + H(+). It carries out the reaction (3S)-3-hydroxybutanoyl-CoA = (3R)-3-hydroxybutanoyl-CoA. It participates in lipid metabolism; fatty acid beta-oxidation. Functionally, catalyzes the formation of a hydroxyacyl-CoA by addition of water on enoyl-CoA. Also exhibits 3-hydroxyacyl-CoA epimerase and 3-hydroxyacyl-CoA dehydrogenase activities. The chain is Fatty acid oxidation complex subunit alpha from Shewanella sp. (strain MR-7).